The sequence spans 378 residues: Polygalacturonase (378 aa).

The first 20 residues, Met-1 to Ala-20, serve as a signal peptide directing secretion. Cysteines 39 and 57 form a disulfide. PbH1 repeat units follow at residues Ser-172–Asp-203, Ser-204–Ser-225, Gly-226–Ser-246, Val-255–Ala-276, and Ile-284–Gln-306. The active-site Proton donor is Asp-218. The cysteines at positions 220 and 236 are disulfide-linked. The active site involves His-240. 2 disulfides stabilise this stretch: Cys-346–Cys-352 and Cys-370–Cys-378.

It belongs to the glycosyl hydrolase 28 family.

It is found in the secreted. The enzyme catalyses (1,4-alpha-D-galacturonosyl)n+m + H2O = (1,4-alpha-D-galacturonosyl)n + (1,4-alpha-D-galacturonosyl)m.. This chain is Polygalacturonase (PEPG1), found in Penicillium expansum (Blue mold rot fungus).